We begin with the raw amino-acid sequence, 217 residues long: Harpin secretion protein HrcR (217 aa).

Helical transmembrane passes span 11-31 (FALF…CTCF), 52-72 (PNMA…APVF), 158-178 (IGFL…NVLL), and 185-205 (VAPM…INGW).

This sequence belongs to the FliP/MopC/SpaP family.

It is found in the cell membrane. Functionally, required for the secretion of harpin. In Erwinia amylovora (Fire blight bacteria), this protein is Harpin secretion protein HrcR (hrcR).